A 315-amino-acid polypeptide reads, in one-letter code: Olfactory receptor 2V2 (315 aa).

Residues 1 to 26 are Extracellular-facing; that stretch reads METWVNQSYTDGFFLLGIFSHSTADL. N6 carries an N-linked (GlcNAc...) asparagine glycan. A helical transmembrane segment spans residues 27 to 50; it reads VLFSVVMAVFTVALCGNVLLIFLI. Over 51–58 the chain is Cytoplasmic; sequence YMDPHLHT. Residues 59-80 form a helical membrane-spanning segment; the sequence is PMYFFLSQLSLMDLMLVCTNVP. The Extracellular portion of the chain corresponds to 81 to 101; the sequence is KMAANFLSGRKSISFVGCGIQ. An intrachain disulfide couples C98 to C190. Residues 102-121 form a helical membrane-spanning segment; sequence IGLFVCLVGSEGLLLGLMAY. The Cytoplasmic portion of the chain corresponds to 122–140; the sequence is DRYVAISHPLHYPILMNQR. The chain crosses the membrane as a helical span at residues 141-159; the sequence is VCLQITGSSWAFGIIDGLI. Topologically, residues 160–196 are extracellular; sequence QMVVVMNFPYCGLRKVNHFFCEMLSLLKLACVDTSLF. Residues 197–220 traverse the membrane as a helical segment; the sequence is EKVIFACCVFMLLFPFSIIVASYA. Topologically, residues 221-237 are cytoplasmic; that stretch reads HILGTVLQMHSAQAWKK. The chain crosses the membrane as a helical span at residues 238–260; the sequence is ALATCSSHLTAVTLFYGAAMFIY. Topologically, residues 261–273 are extracellular; it reads LRPRHYRAPSHDK. A helical membrane pass occupies residues 274–293; it reads VASIFYTVLTPMLNPLIYSL. At 294-315 the chain is on the cytoplasmic side; that stretch reads RNREVMGALRKGLDRCRIGSQH.

It belongs to the G-protein coupled receptor 1 family.

It is found in the cell membrane. Odorant receptor. In Homo sapiens (Human), this protein is Olfactory receptor 2V2 (OR2V2).